The chain runs to 278 residues: 2-dehydro-3-deoxyphosphooctonate aldolase (278 aa).

The protein belongs to the KdsA family.

It is found in the cytoplasm. The enzyme catalyses D-arabinose 5-phosphate + phosphoenolpyruvate + H2O = 3-deoxy-alpha-D-manno-2-octulosonate-8-phosphate + phosphate. Its pathway is carbohydrate biosynthesis; 3-deoxy-D-manno-octulosonate biosynthesis; 3-deoxy-D-manno-octulosonate from D-ribulose 5-phosphate: step 2/3. It functions in the pathway bacterial outer membrane biogenesis; lipopolysaccharide biosynthesis. The chain is 2-dehydro-3-deoxyphosphooctonate aldolase from Bartonella quintana (strain Toulouse) (Rochalimaea quintana).